The primary structure comprises 299 residues: Methionyl-tRNA formyltransferase (299 aa).

109–112 serves as a coordination point for (6S)-5,6,7,8-tetrahydrofolate; it reads SLLP.

The protein belongs to the Fmt family.

It catalyses the reaction L-methionyl-tRNA(fMet) + (6R)-10-formyltetrahydrofolate = N-formyl-L-methionyl-tRNA(fMet) + (6S)-5,6,7,8-tetrahydrofolate + H(+). Its function is as follows. Attaches a formyl group to the free amino group of methionyl-tRNA(fMet). The formyl group appears to play a dual role in the initiator identity of N-formylmethionyl-tRNA by promoting its recognition by IF2 and preventing the misappropriation of this tRNA by the elongation apparatus. The chain is Methionyl-tRNA formyltransferase from Wolbachia pipientis subsp. Culex pipiens (strain wPip).